Reading from the N-terminus, the 100-residue chain is Putative insulin-like peptide beta-type 6 (100 aa).

The signal sequence occupies residues 1–18 (MHSIVALMLIGTILPIAA). 4 cysteine pairs are disulfide-bonded: Cys54–Cys83, Cys66–Cys96, Cys70–Cys97, and Cys82–Cys87.

This sequence belongs to the insulin family.

It localises to the secreted. This Caenorhabditis elegans protein is Putative insulin-like peptide beta-type 6 (ins-5).